Here is a 284-residue protein sequence, read N- to C-terminus: MQARGQVLITAAELAGMIQAGDPVSILDVRWRLDEPDGHAAYLQGHLPGAVFVSLEDELSDHTIAGRGRHPLPSGASLQATVRRCGIRHDVPVVVYDDWNRAGSARAWWVLTAAGIANVRILDGGLPAWRSAGGSIETGQVSPQLGNVTVLHDDLYAGQRLTLTAQQAGAGGVTLLDARVPERFRGDVEPVDAVAGHIPGAINVPSGSVLADDGTFLGNGALNALLSDHGIDHGGRVGVYCGSGVSAAVIVAALAVIGQDAELFPGSWSEWSSDPTRPVGRGTA.

Rhodanese domains are found at residues 20-138 (AGDP…SIET) and 169-280 (GAGG…RPVG). Arginine 183 is a binding site for substrate. Cysteine 241 functions as the Cysteine persulfide intermediate in the catalytic mechanism.

The catalysed reaction is thiosulfate + hydrogen cyanide = thiocyanate + sulfite + 2 H(+). This Mycobacterium tuberculosis (strain CDC 1551 / Oshkosh) protein is Putative thiosulfate sulfurtransferase SseB (sseB).